The chain runs to 1983 residues: Nonribosomal peptide synthetase verP (1983 aa).

Residues phenylalanine 11–lysine 405 are adenylation 1. The 77-residue stretch at aspartate 526–alanine 602 folds into the Carrier 1 domain. Residue serine 563 is modified to O-(pantetheine 4'-phosphoryl)serine. The segment at glutamate 769–serine 1047 is condensation 1. The tract at residues glutamine 1089–arginine 1469 is adenylation 2. Residues isoleucine 1584–leucine 1662 enclose the Carrier 2 domain. O-(pantetheine 4'-phosphoryl)serine is present on serine 1622. Residues lysine 1652 to cysteine 1976 form a condensation 2 region.

The protein belongs to the NRP synthetase family.

It functions in the pathway mycotoxin biosynthesis. Its function is as follows. Nonribosomal peptide synthetase; part of the gene cluster that mediates the biosynthesis of 11'-deoxyverticillin A, one of the dimeric epipolythiodioxopiperazines (ETPs) from the verticillin family that act as mycotoxins. 11'-deoxyverticillin A is required for normal conidiation. The nonribosomal peptide synthetase verP is speculated to be responsible for condensation of amino acids to form the carbon skeleton of verticillin, whereas the cluster-specific tailoring enzymes are involved in further modifications leading to the production of 11'-deoxyverticillin A. In Clonostachys rogersoniana, this protein is Nonribosomal peptide synthetase verP.